Here is a 211-residue protein sequence, read N- to C-terminus: FMN-dependent NADH:quinone oxidoreductase 2 (211 aa).

Residues S10 and 17-19 each bind FMN; that span reads SRS.

Belongs to the azoreductase type 1 family. In terms of assembly, homodimer. It depends on FMN as a cofactor.

The enzyme catalyses 2 a quinone + NADH + H(+) = 2 a 1,4-benzosemiquinone + NAD(+). It carries out the reaction N,N-dimethyl-1,4-phenylenediamine + anthranilate + 2 NAD(+) = 2-(4-dimethylaminophenyl)diazenylbenzoate + 2 NADH + 2 H(+). Functionally, quinone reductase that provides resistance to thiol-specific stress caused by electrophilic quinones. In terms of biological role, also exhibits azoreductase activity. Catalyzes the reductive cleavage of the azo bond in aromatic azo compounds to the corresponding amines. The sequence is that of FMN-dependent NADH:quinone oxidoreductase 2 from Listeria monocytogenes serovar 1/2a (strain ATCC BAA-679 / EGD-e).